A 264-amino-acid polypeptide reads, in one-letter code: Phosphatidylglycerol--prolipoprotein diacylglyceryl transferase (264 aa).

Helical transmembrane passes span 14–34, 60–80, 98–118, 128–148, 176–196, 203–223, and 240–260; these read IIFS…LIGF, LIYT…VFFY, GGMS…WVSF, ADFI…GNFI, SQLY…NWFI, GSVA…VEYV, and GQLL…WAYS. An a 1,2-diacyl-sn-glycero-3-phospho-(1'-sn-glycerol)-binding site is contributed by arginine 143.

Belongs to the Lgt family.

It localises to the cell inner membrane. It catalyses the reaction L-cysteinyl-[prolipoprotein] + a 1,2-diacyl-sn-glycero-3-phospho-(1'-sn-glycerol) = an S-1,2-diacyl-sn-glyceryl-L-cysteinyl-[prolipoprotein] + sn-glycerol 1-phosphate + H(+). The protein operates within protein modification; lipoprotein biosynthesis (diacylglyceryl transfer). Its function is as follows. Catalyzes the transfer of the diacylglyceryl group from phosphatidylglycerol to the sulfhydryl group of the N-terminal cysteine of a prolipoprotein, the first step in the formation of mature lipoproteins. This chain is Phosphatidylglycerol--prolipoprotein diacylglyceryl transferase, found in Actinobacillus pleuropneumoniae serotype 7 (strain AP76).